Consider the following 273-residue polypeptide: Formamidopyrimidine-DNA glycosylase (273 aa).

Catalysis depends on P2, which acts as the Schiff-base intermediate with DNA. The active-site Proton donor is E3. Catalysis depends on K60, which acts as the Proton donor; for beta-elimination activity. Residues H94, R113, and K154 each coordinate DNA. An FPG-type zinc finger spans residues 239–273 (EAYGRTGEPCRRCGTPIERIVVAQRSTHICPVCQA). R263 acts as the Proton donor; for delta-elimination activity in catalysis.

This sequence belongs to the FPG family. In terms of assembly, monomer. Zn(2+) is required as a cofactor.

It carries out the reaction Hydrolysis of DNA containing ring-opened 7-methylguanine residues, releasing 2,6-diamino-4-hydroxy-5-(N-methyl)formamidopyrimidine.. The enzyme catalyses 2'-deoxyribonucleotide-(2'-deoxyribose 5'-phosphate)-2'-deoxyribonucleotide-DNA = a 3'-end 2'-deoxyribonucleotide-(2,3-dehydro-2,3-deoxyribose 5'-phosphate)-DNA + a 5'-end 5'-phospho-2'-deoxyribonucleoside-DNA + H(+). Involved in base excision repair of DNA damaged by oxidation or by mutagenic agents. Acts as a DNA glycosylase that recognizes and removes damaged bases. Has a preference for oxidized purines, such as 7,8-dihydro-8-oxoguanine (8-oxoG). Has AP (apurinic/apyrimidinic) lyase activity and introduces nicks in the DNA strand. Cleaves the DNA backbone by beta-delta elimination to generate a single-strand break at the site of the removed base with both 3'- and 5'-phosphates. This chain is Formamidopyrimidine-DNA glycosylase, found in Herpetosiphon aurantiacus (strain ATCC 23779 / DSM 785 / 114-95).